We begin with the raw amino-acid sequence, 551 residues long: RCC1 and BTB domain-containing protein 2 (551 aa).

6 RCC1 repeats span residues 64 to 115, 117 to 169, 171 to 222, 223 to 274, 276 to 326, and 328 to 382; these read NDEI…VLAT, DGEV…VLTS, GEVF…AVVD, TGEV…VLTD, GQIY…AAKS, and GGHV…TVAE. Residues 394–457 enclose the BTB domain; the sequence is ADLKFLVDGK…LYTDNISLPP (64 aa).

It is found in the cytoplasmic vesicle. It localises to the secretory vesicle. Its subcellular location is the acrosome. The polypeptide is RCC1 and BTB domain-containing protein 2 (Rcbtb2) (Rattus norvegicus (Rat)).